We begin with the raw amino-acid sequence, 408 residues long: Aminomethyltransferase, mitochondrial (408 aa).

Residues 1-30 constitute a mitochondrion transit peptide; the sequence is MRGGLWQLGQSITRRLANGGDKKAVARRCF. Substrate contacts are provided by glutamate 235, arginine 266, and tyrosine 404.

This sequence belongs to the GcvT family. In terms of assembly, the glycine cleavage system is composed of four proteins: P, T, L and H.

The protein localises to the mitochondrion. The catalysed reaction is N(6)-[(R)-S(8)-aminomethyldihydrolipoyl]-L-lysyl-[protein] + (6S)-5,6,7,8-tetrahydrofolate = N(6)-[(R)-dihydrolipoyl]-L-lysyl-[protein] + (6R)-5,10-methylene-5,6,7,8-tetrahydrofolate + NH4(+). The glycine cleavage system catalyzes the degradation of glycine. In Pisum sativum (Garden pea), this protein is Aminomethyltransferase, mitochondrial (GDCST).